Here is a 732-residue protein sequence, read N- to C-terminus: uncharacterized protein (732 aa).

It belongs to the mimivirus L137 family.

This is an uncharacterized protein from Acanthamoeba polyphaga mimivirus (APMV).